Consider the following 343-residue polypeptide: Mas-related G-protein coupled receptor member F (343 aa).

At 1–44 the chain is on the extracellular side; sequence MAGNCSWEAHSTNQNKMCPGMSEARELYSRGFLTIEQIATLPPP. Asn-4 carries an N-linked (GlcNAc...) asparagine glycan. A helical membrane pass occupies residues 45–66; sequence AVTNYIFLLLCLCGLVGNGLVL. Residues 67–82 are Cytoplasmic-facing; sequence WFFGFSIKRTPFSIYF. Residues 83–104 form a helical membrane-spanning segment; that stretch reads LHLASADGMYLFSKAVIALLNM. The Extracellular portion of the chain corresponds to 105–123; the sequence is GTFLGSFPDYIRRVSRIVG. A helical membrane pass occupies residues 124-144; sequence LCTFFTGVSLLPAISIERCVS. Residues 145–160 lie on the Cytoplasmic side of the membrane; sequence VIFPTWYWRRRPKRLS. The helical transmembrane segment at 161–181 threads the bilayer; it reads AGVCALLWMLSFLVTSIHNYF. Residues 182–198 lie on the Extracellular side of the membrane; the sequence is CMFLGHEAPGTVCRNMD. A helical membrane pass occupies residues 199 to 220; the sequence is IALGILLFFLFCPLMVLPCLAL. Residues 221 to 241 are Cytoplasmic-facing; the sequence is ILHVECRARRRQRSAKLNHVV. The helical transmembrane segment at 242–263 threads the bilayer; that stretch reads LAIVSVFLVSSIYLGIDWFLFW. The Extracellular portion of the chain corresponds to 264-273; the sequence is VFQIPAPFPE. A helical membrane pass occupies residues 274–294; the sequence is YVTDLCICINSSAKPIVYFLA. Topologically, residues 295-343 are cytoplasmic; the sequence is GRDKSQRLWEPLRVVFQRALRDGAEPGDAASSTPNTVTMEMQCPSGNAS. The disordered stretch occupies residues 318 to 343; it reads AEPGDAASSTPNTVTMEMQCPSGNAS. Polar residues predominate over residues 324-343; the sequence is ASSTPNTVTMEMQCPSGNAS.

This sequence belongs to the G-protein coupled receptor 1 family. Mas subfamily.

Its subcellular location is the cell membrane. In terms of biological role, orphan receptor. May bind to a neuropeptide and may regulate nociceptor function and/or development, including the sensation or modulation of pain. In Mus musculus (Mouse), this protein is Mas-related G-protein coupled receptor member F (Mrgprf).